Here is a 439-residue protein sequence, read N- to C-terminus: Putative myrosinase 3 (439 aa).

Positions 1–19 (MKFRALGLVLLLAVETCKA) are cleaved as a signal peptide. N33 carries an N-linked (GlcNAc...) asparagine glycan. A beta-D-glucoside-binding positions include H145, 190–191 (NQ), and Y316. N336 carries an N-linked (GlcNAc...) asparagine glycan. 2 residues coordinate a beta-D-glucoside: E386 and W404. The active-site Nucleophile is the E386.

Belongs to the glycosyl hydrolase 1 family. Expressed specifically in stamens and petals.

The catalysed reaction is a thioglucoside + H2O = a sugar + a thiol.. This chain is Putative myrosinase 3, found in Arabidopsis thaliana (Mouse-ear cress).